We begin with the raw amino-acid sequence, 183 residues long: Caspase recruitment domain-containing protein 19 (183 aa).

A disulfide bridge links Cys7 with Cys77. The CARD domain occupies 8-99; sequence DRLVQDTPFL…PLHSCLPSRH (92 aa). The helical transmembrane segment at 122–142 threads the bilayer; sequence GPVAFLTCLGLAAGLALLIYC.

Associates with BCL10 by CARD-CARD interaction.

The protein localises to the endoplasmic reticulum membrane. It is found in the mitochondrion membrane. Functionally, plays a role in inhibiting the effects of BCL10-induced activation of NF-kappa-B. May inhibit the phosphorylation of BCL10 in a CARD-dependent manner. This chain is Caspase recruitment domain-containing protein 19 (CARD19), found in Bos taurus (Bovine).